We begin with the raw amino-acid sequence, 428 residues long: Magnesium transporter MRS2-C (428 aa).

Transmembrane regions (helical) follow at residues 364–384 and 400–420; these read LLLTTATFVVAIFGVVSGVFG and WTLVITGVCGLVIFCCFIWYF. The Required for magnesium transport activity signature appears at 384-386; sequence GMN.

Belongs to the CorA metal ion transporter (MIT) (TC 1.A.35.5) family.

The protein resides in the membrane. In terms of biological role, magnesium transporter that may mediate the influx of magnesium. This Oryza sativa subsp. indica (Rice) protein is Magnesium transporter MRS2-C.